We begin with the raw amino-acid sequence, 396 residues long: ATP-dependent RNA helicase eIF4A (396 aa).

A Q motif motif is present at residues H22–Q50. A Helicase ATP-binding domain is found at I53–I223. A66–T73 provides a ligand contact to ATP. The DEAD box signature appears at D171–D174. In terms of domain architecture, Helicase C-terminal spans G234 to F395.

This sequence belongs to the DEAD box helicase family. eIF4A subfamily. In terms of assembly, component of the eIF4F complex, which composition varies with external and internal environmental conditions. It is composed of at least eIF4A, eIF4E and eIF4G.

Its subcellular location is the cytoplasm. The enzyme catalyses ATP + H2O = ADP + phosphate + H(+). Functionally, ATP-dependent RNA helicase which is a subunit of the eIF4F complex involved in cap recognition and is required for mRNA binding to ribosome. In the current model of translation initiation, eIF4A unwinds RNA secondary structures in the 5'-UTR of mRNAs which is necessary to allow efficient binding of the small ribosomal subunit, and subsequent scanning for the initiator codon. This Eremothecium gossypii (strain ATCC 10895 / CBS 109.51 / FGSC 9923 / NRRL Y-1056) (Yeast) protein is ATP-dependent RNA helicase eIF4A (TIF1).